Reading from the N-terminus, the 659-residue chain is Serine/threonine-protein kinase StkP (659 aa).

The Cytoplasmic portion of the chain corresponds to 1–342; that stretch reads MIQIGKIFAG…PQAPKKHRFK (342 aa). Residues 12–273 form the Protein kinase domain; sequence YRIVKQIGRG…EMYVDLSSSL (262 aa). ATP-binding positions include 18–26 and Lys42; that span reads IGRGGMADV. Residue Asp136 is the Proton acceptor of the active site. A helical transmembrane segment spans residues 343 to 363; it reads MRYLILLASLVLVAASLIWIL. The Extracellular portion of the chain corresponds to 364–659; sequence SRTPATIAIP…YKPKTTSATP (296 aa). PASTA domains lie at 366 to 433, 434 to 505, 506 to 577, and 578 to 651; these read TPAT…VVSS, GKQS…TVAK, KATT…TVAK, and KVTS…SIYK. The tract at residues 541 to 561 is disordered; the sequence is EEESSESEPGTIMKQSPGAGT.

The protein belongs to the protein kinase superfamily. Ser/Thr protein kinase family. Homodimer. StkP forms dimers through its transmembrane and extracellular domains. Dimer formation likely promotes autophosphorylation activity and might be necessary for targeting StkP substrate. Autophosphorylation occurs predominantly at the threonine residue and weakly at the serine residue. Dephosphorylated by PhpP.

The protein localises to the cell membrane. It catalyses the reaction L-seryl-[protein] + ATP = O-phospho-L-seryl-[protein] + ADP + H(+). It carries out the reaction L-threonyl-[protein] + ATP = O-phospho-L-threonyl-[protein] + ADP + H(+). Protein kinase involved in signal transduction pathways that regulate various cellular processes. Likely senses intracellular peptidoglycan subunits present in the cell division septa of actively growing cells; thus, intracellular unlinked peptidoglycan may serve as the signal molecules that trigger StkP phosphorylation activity on a set of substrates. Plays a crucial role in the regulation of cell shape and cell division of S.pneumoniae through control of at least DivIVA activity. Is involved in competence triggering, and is required for the expression of the central competence operon comCDE. StkP also plays an important role for bacterial survival in vivo. Identified target substrates that are specifically phosphorylated by StkP in vivo, mainly on threonine residues, are DivIVA, GlmM, PpaC, MapZ, KhpB (also called EloR/Jag, shown in strains R6 and Rx1) and StkP itself. Autophosphorylated StkP is a substrate for the cotranscribed protein phosphatase PhpP (shown in the avirulent strain Rx / Cp1015); PhpP and StkP appear to constitute a functional signaling couple in vivo. This is Serine/threonine-protein kinase StkP (stkP) from Streptococcus pneumoniae serotype 2 (strain D39 / NCTC 7466).